The chain runs to 296 residues: Uricase (296 aa).

Active-site charge relay system residues include K14 and T61. Urate-binding residues include T61, D62, F163, R180, V229, Q230, and N256. The active-site Charge relay system is the H258.

Belongs to the uricase family.

The protein resides in the peroxisome. Its subcellular location is the cytoplasm. It localises to the nucleus. The enzyme catalyses urate + O2 + H2O = 5-hydroxyisourate + H2O2. The protein operates within purine metabolism; urate degradation; (S)-allantoin from urate: step 1/3. Its function is as follows. Catalyzes the oxidation of uric acid to 5-hydroxyisourate, which is further processed to form (S)-allantoin. The sequence is that of Uricase from Schizosaccharomyces pombe (strain 972 / ATCC 24843) (Fission yeast).